Reading from the N-terminus, the 468-residue chain is Cysteine--tRNA ligase (468 aa).

Residue C33 coordinates Zn(2+). A 'HIGH' region motif is present at residues 35 to 45; it reads ATVQGLPHIGH. 3 residues coordinate Zn(2+): C211, H236, and E240. The 'KMSKS' region signature appears at 267 to 271; the sequence is KMSKS. K270 serves as a coordination point for ATP.

The protein belongs to the class-I aminoacyl-tRNA synthetase family. In terms of assembly, monomer. Requires Zn(2+) as cofactor.

The protein localises to the cytoplasm. The catalysed reaction is tRNA(Cys) + L-cysteine + ATP = L-cysteinyl-tRNA(Cys) + AMP + diphosphate. The protein is Cysteine--tRNA ligase of Mycobacterium avium (strain 104).